A 450-amino-acid chain; its full sequence is Plasminogen-binding protein PgbA (450 aa).

3 stretches are compositionally biased toward basic and acidic residues: residues 262–273 (EIKQEAIKEPKK), 284–310 (LEEK…DERK), and 317–362 (KAME…REIN). Residues 262-450 (EIKQEAIKEP…RRKALEMNKK (189 aa)) form a disordered region. The span at 363–386 (QESANEPSSENNATLKDTENTSVL) shows a compositional bias: polar residues. The span at 389-450 (SAAKKEAPKP…RRKALEMNKK (62 aa)) shows a compositional bias: basic and acidic residues.

The protein localises to the cell surface. In terms of biological role, binds plasminogen, specifically, and in a concentration and lysine-dependent manner. Plasminogen is the precursor of plasmin, a serine protease that cleaves fibrin, fibronectin, laminin and vitronectin. Acquisition of plasminogen/plasmin could enable H.pylori to degrade host components. This Helicobacter pylori (strain J99 / ATCC 700824) (Campylobacter pylori J99) protein is Plasminogen-binding protein PgbA (pgbA).